A 461-amino-acid chain; its full sequence is Vitamin K-dependent protein C (461 aa).

The signal sequence occupies residues 1-18 (MWQFRIFLLFASTWGISG). Residues 19–41 (VSAHPDPVFSSSEGAHQVLRVRR) constitute a propeptide that is removed on maturation. The Gla domain maps to 42–87 (ANSFLEEVRAGSLERECMEEICDFEEAQEIFQNVEDTLAFWIKYFD). 4-carboxyglutamate occurs at positions 47, 48, 55, 57, 60, 61, 66, 67, 70, and 76. An intrachain disulfide couples C58 to C63. 9 disulfide bridges follow: C91-C110, C100-C105, C104-C119, C121-C130, C139-C150, C146-C159, C161-C174, C182-C320, and C239-C255. EGF-like domains lie at 96-131 (LDHQ…RFCQ) and 135-175 (GFQD…MHCR). D112 is subject to (3R)-3-hydroxyaspartate. One can recognise a Peptidase S1 domain in the interval 213 to 450 (IVNGTLTKQG…YLKWIHSYIG (238 aa)). N215 is a glycosylation site (N-linked (GlcNAc...) asparagine). H254 functions as the Charge relay system in the catalytic mechanism. Residue N291 is glycosylated (N-linked (GlcNAc...) asparagine). D300 serves as the catalytic Charge relay system. An N-linked (GlcNAc...) asparagine glycan is attached at N355. Intrachain disulfides connect C373–C387 and C398–C426. The active-site Charge relay system is S402.

It belongs to the peptidase S1 family. Synthesized as a single chain precursor, which is cleaved into a light chain and a heavy chain held together by a disulfide bond. The enzyme is then activated by thrombin, which cleaves a tetradecapeptide from the amino end of the heavy chain; this reaction, which occurs at the surface of endothelial cells, is strongly promoted by thrombomodulin. Post-translationally, the vitamin K-dependent, enzymatic carboxylation of some Glu residues allows the modified protein to bind calcium. In terms of processing, the iron and 2-oxoglutarate dependent 3-hydroxylation of aspartate and asparagine is (R) stereospecific within EGF domains. In terms of tissue distribution, plasma; synthesized in the liver.

It is found in the secreted. Its subcellular location is the golgi apparatus. The protein localises to the endoplasmic reticulum. It catalyses the reaction Degradation of blood coagulation factors Va and VIIIa.. Its function is as follows. Protein C is a vitamin K-dependent serine protease that regulates blood coagulation by inactivating factors Va and VIIIa in the presence of calcium ions and phospholipids. Exerts a protective effect on the endothelial cell barrier function. The chain is Vitamin K-dependent protein C (Proc) from Rattus norvegicus (Rat).